The chain runs to 642 residues: Threonine--tRNA ligase (642 aa).

Residues 1 to 61 (MPVITLPDGS…ETDSELSIIT (61 aa)) enclose the TGS domain. The catalytic stretch occupies residues 243–534 (DHRKIGKQLD…LIEEYAGKFP (292 aa)). Residues C334, H385, and H511 each contribute to the Zn(2+) site.

Belongs to the class-II aminoacyl-tRNA synthetase family. As to quaternary structure, homodimer. It depends on Zn(2+) as a cofactor.

The protein resides in the cytoplasm. The catalysed reaction is tRNA(Thr) + L-threonine + ATP = L-threonyl-tRNA(Thr) + AMP + diphosphate + H(+). Catalyzes the attachment of threonine to tRNA(Thr) in a two-step reaction: L-threonine is first activated by ATP to form Thr-AMP and then transferred to the acceptor end of tRNA(Thr). Also edits incorrectly charged L-seryl-tRNA(Thr). This chain is Threonine--tRNA ligase, found in Shewanella halifaxensis (strain HAW-EB4).